The following is a 269-amino-acid chain: Protein IAL1 (269 aa).

Residues 32–133 (SPCAACKFLR…QDLARAKYEL (102 aa)) enclose the LOB domain.

This sequence belongs to the LOB domain-containing protein family. Expressed in leaves, leaf primordia, immature ears, immature tassels, whole ovules, silk and husk leaves.

It localises to the nucleus. This chain is Protein IAL1, found in Zea mays (Maize).